A 404-amino-acid polypeptide reads, in one-letter code: Glucose-1-phosphate adenylyltransferase (404 aa).

Alpha-D-glucose 1-phosphate-binding positions include Tyr99, Gly164, 179–180 (EK), and Ser197.

It belongs to the bacterial/plant glucose-1-phosphate adenylyltransferase family. As to quaternary structure, homotetramer.

The catalysed reaction is alpha-D-glucose 1-phosphate + ATP + H(+) = ADP-alpha-D-glucose + diphosphate. The protein operates within glycan biosynthesis; glycogen biosynthesis. Its function is as follows. Involved in the biosynthesis of ADP-glucose, a building block required for the elongation reactions to produce glycogen. Catalyzes the reaction between ATP and alpha-D-glucose 1-phosphate (G1P) to produce pyrophosphate and ADP-Glc. This is Glucose-1-phosphate adenylyltransferase from Rhodococcus jostii (strain RHA1).